A 183-amino-acid polypeptide reads, in one-letter code: Tetrahydromethanopterin S-methyltransferase subunit A 2 (183 aa).

Topologically, residues 1 to 101 (MFLMVEKKPV…TMKALHSNGV (101 aa)) are cytoplasmic. Residue histidine 87 coordinates 5-hydroxybenzimidazolylcob(I)amide. Residues 102 to 118 (DLETGRIIGATGAIPYI) traverse the membrane as a helical segment. At 119–183 (ENMPEEAIER…IGKGDSEENT (65 aa)) the chain is on the extracellular side.

It belongs to the MtrA family. As to quaternary structure, the complex is composed of 8 subunits; MtrA, MtrB, MtrC, MtrD, MtrE, MtrF, MtrG and MtrH. It depends on 5-hydroxybenzimidazolylcob(I)amide as a cofactor.

It localises to the cell membrane. It catalyses the reaction 5-methyl-5,6,7,8-tetrahydromethanopterin + coenzyme M + 2 Na(+)(in) = 5,6,7,8-tetrahydromethanopterin + methyl-coenzyme M + 2 Na(+)(out). The protein operates within one-carbon metabolism; methanogenesis from CO(2); methyl-coenzyme M from 5,10-methylene-5,6,7,8-tetrahydromethanopterin: step 2/2. In terms of biological role, part of a complex that catalyzes the formation of methyl-coenzyme M and tetrahydromethanopterin from coenzyme M and methyl-tetrahydromethanopterin. This is an energy-conserving, sodium-ion translocating step. The sequence is that of Tetrahydromethanopterin S-methyltransferase subunit A 2 from Methanothermobacter thermautotrophicus (strain ATCC 29096 / DSM 1053 / JCM 10044 / NBRC 100330 / Delta H) (Methanobacterium thermoautotrophicum).